Here is a 495-residue protein sequence, read N- to C-terminus: N-succinylglutamate 5-semialdehyde dehydrogenase (495 aa).

228–233 (GSYATG) lines the NAD(+) pocket. Active-site residues include E251 and C285.

The protein belongs to the aldehyde dehydrogenase family. AstD subfamily.

The enzyme catalyses N-succinyl-L-glutamate 5-semialdehyde + NAD(+) + H2O = N-succinyl-L-glutamate + NADH + 2 H(+). It functions in the pathway amino-acid degradation; L-arginine degradation via AST pathway; L-glutamate and succinate from L-arginine: step 4/5. Its function is as follows. Catalyzes the NAD-dependent reduction of succinylglutamate semialdehyde into succinylglutamate. This chain is N-succinylglutamate 5-semialdehyde dehydrogenase, found in Legionella pneumophila (strain Corby).